Reading from the N-terminus, the 415-residue chain is MGSLGAILKHPDDFYPLLKLKIAARHAEKQIPSEPHWAFCYSMLHKVSRSFGLVIQQLGPQLRDAVCIFYLVLRALDTVEDDTSISTEVKVPIVMAFHCHIYDNDWHFSCGTKEYKVLMDEFHHVSNAFLDLGSSYKEAIEDITMRMGAGMAKFICKEVETIDDYDEYCHYVAGLVGLGLSKLFHASGAEDLATDSLSNSMGLFLQKTNIIRDYLEDINEIPKSRMFWPRQIWSKYVDKLEDLKYEENSGKAVQCLNDMVTNALLHVEDCLKYMSDLRDPAIFRFCAIPQIMAIGTLALCYNNIQVFRGVVKMRRGLTAKVIDRTNTMSDVYGTFFDFSCMLKSKVDNNDPNATKTLSRLEAIQKICKNSGALTTKRKSYIIENESGYNSTLIIILFIILAILYAYLSSNLPNSL.

The next 2 membrane-spanning stretches (helical) occupy residues 281–301 (AIFR…ALCY) and 392–412 (LIII…SNLP).

This sequence belongs to the phytoene/squalene synthase family. It depends on Mg(2+) as a cofactor. The cofactor is Mn(2+).

The protein resides in the endoplasmic reticulum membrane. The catalysed reaction is 2 (2E,6E)-farnesyl diphosphate + NADH + H(+) = squalene + 2 diphosphate + NAD(+). The enzyme catalyses 2 (2E,6E)-farnesyl diphosphate + NADPH + H(+) = squalene + 2 diphosphate + NADP(+). It participates in terpene metabolism; lanosterol biosynthesis; lanosterol from farnesyl diphosphate: step 1/3. In terms of biological role, component of the triterpene saponins (e.g. ginsenosides or panaxosides) and phytosterols biosynthetic pathways. Catalyzes the biosynthesis of squalene. The chain is Squalene synthase 3 from Panax ginseng (Korean ginseng).